The following is a 363-amino-acid chain: 3-dehydroquinate synthase (363 aa).

NAD(+) is bound by residues serine 72–lysine 77, threonine 130–threonine 131, lysine 142, and lysine 151. Positions 184, 247, and 264 each coordinate Zn(2+).

This sequence belongs to the sugar phosphate cyclases superfamily. Dehydroquinate synthase family. Co(2+) serves as cofactor. Zn(2+) is required as a cofactor. It depends on NAD(+) as a cofactor.

The protein resides in the cytoplasm. It catalyses the reaction 7-phospho-2-dehydro-3-deoxy-D-arabino-heptonate = 3-dehydroquinate + phosphate. Its pathway is metabolic intermediate biosynthesis; chorismate biosynthesis; chorismate from D-erythrose 4-phosphate and phosphoenolpyruvate: step 2/7. In terms of biological role, catalyzes the conversion of 3-deoxy-D-arabino-heptulosonate 7-phosphate (DAHP) to dehydroquinate (DHQ). This chain is 3-dehydroquinate synthase, found in Bacillus thuringiensis (strain Al Hakam).